Here is a 314-residue protein sequence, read N- to C-terminus: Acetaldehyde dehydrogenase 2 (314 aa).

11 to 14 (SGNI) is an NAD(+) binding site. The active-site Acyl-thioester intermediate is the Cys-129. NAD(+)-binding positions include 160-168 (SAGPGTRAN) and Asn-291.

Belongs to the acetaldehyde dehydrogenase family.

It catalyses the reaction acetaldehyde + NAD(+) + CoA = acetyl-CoA + NADH + H(+). The polypeptide is Acetaldehyde dehydrogenase 2 (Rhodococcus erythropolis (strain PR4 / NBRC 100887)).